Here is a 320-residue protein sequence, read N- to C-terminus: Malate dehydrogenase (320 aa).

Residues 10 to 15 (GSGMIG) and D34 each bind NAD(+). Positions 83 and 89 each coordinate substrate. NAD(+)-binding positions include N96 and 119–121 (ITN). Substrate contacts are provided by N121 and R152. The active-site Proton acceptor is the H176.

Belongs to the LDH/MDH superfamily. MDH type 3 family.

The catalysed reaction is (S)-malate + NAD(+) = oxaloacetate + NADH + H(+). Functionally, catalyzes the reversible oxidation of malate to oxaloacetate. This chain is Malate dehydrogenase, found in Maricaulis maris (strain MCS10) (Caulobacter maris).